The sequence spans 325 residues: Beta-ketoacyl-[acyl-carrier-protein] synthase III (325 aa).

Catalysis depends on residues C116 and H252. The interval 253 to 257 (QANLR) is ACP-binding. The active site involves N282.

This sequence belongs to the thiolase-like superfamily. FabH family. In terms of assembly, homodimer.

The protein localises to the cytoplasm. It catalyses the reaction malonyl-[ACP] + acetyl-CoA + H(+) = 3-oxobutanoyl-[ACP] + CO2 + CoA. It participates in lipid metabolism; fatty acid biosynthesis. Its function is as follows. Catalyzes the condensation reaction of fatty acid synthesis by the addition to an acyl acceptor of two carbons from malonyl-ACP. Catalyzes the first condensation reaction which initiates fatty acid synthesis and may therefore play a role in governing the total rate of fatty acid production. Possesses both acetoacetyl-ACP synthase and acetyl transacylase activities. Its substrate specificity determines the biosynthesis of branched-chain and/or straight-chain of fatty acids. This Xanthomonas euvesicatoria pv. vesicatoria (strain 85-10) (Xanthomonas campestris pv. vesicatoria) protein is Beta-ketoacyl-[acyl-carrier-protein] synthase III.